A 316-amino-acid polypeptide reads, in one-letter code: Transaldolase (316 aa).

K132 acts as the Schiff-base intermediate with substrate in catalysis.

It belongs to the transaldolase family. Type 1 subfamily. As to quaternary structure, homodimer.

It is found in the cytoplasm. The catalysed reaction is D-sedoheptulose 7-phosphate + D-glyceraldehyde 3-phosphate = D-erythrose 4-phosphate + beta-D-fructose 6-phosphate. The protein operates within carbohydrate degradation; pentose phosphate pathway; D-glyceraldehyde 3-phosphate and beta-D-fructose 6-phosphate from D-ribose 5-phosphate and D-xylulose 5-phosphate (non-oxidative stage): step 2/3. Functionally, transaldolase is important for the balance of metabolites in the pentose-phosphate pathway. In Aliivibrio fischeri (strain MJ11) (Vibrio fischeri), this protein is Transaldolase.